We begin with the raw amino-acid sequence, 81 residues long: RNA-binding protein Hfq (81 aa).

One can recognise a Sm domain in the interval D11–I71.

This sequence belongs to the Hfq family. As to quaternary structure, homohexamer.

Functionally, RNA chaperone that binds small regulatory RNA (sRNAs) and mRNAs to facilitate mRNA translational regulation in response to envelope stress, environmental stress and changes in metabolite concentrations. Also binds with high specificity to tRNAs. In Clostridium beijerinckii (strain ATCC 51743 / NCIMB 8052) (Clostridium acetobutylicum), this protein is RNA-binding protein Hfq.